The chain runs to 134 residues: Translation initiation factor 5A (134 aa).

At Lys-36 the chain carries Hypusine.

This sequence belongs to the eIF-5A family.

The protein resides in the cytoplasm. Functions by promoting the formation of the first peptide bond. The protein is Translation initiation factor 5A (eIF5A) of Korarchaeum cryptofilum (strain OPF8).